The chain runs to 81 residues: Putative defensin-like protein 102 (81 aa).

The first 24 residues, 1 to 24 (MTTTMKTFVAFVLTVFFIMSSAHC), serve as a signal peptide directing secretion. 4 disulfide bridges follow: C43–C78, C49–C71, C57–C76, and C61–C77.

Belongs to the DEFL family.

The protein resides in the secreted. In Arabidopsis thaliana (Mouse-ear cress), this protein is Putative defensin-like protein 102.